The chain runs to 103 residues: c-Myc-binding protein (103 aa).

This sequence belongs to the AMY1 family. In terms of assembly, binds via its C-terminal region to the N-terminal region of MYC. Associates with AKAP1/S-AKAP84. Interacts with MYCBPAP. Interacts with CFAP91.

It localises to the cytoplasm. Its subcellular location is the nucleus. Its function is as follows. May control the transcriptional activity of MYC. Stimulates the activation of E box-dependent transcription by MYC. This is c-Myc-binding protein (Mycbp) from Mus musculus (Mouse).